A 371-amino-acid chain; its full sequence is 4-hydroxy-3-methylbut-2-en-1-yl diphosphate synthase (flavodoxin) (371 aa).

[4Fe-4S] cluster contacts are provided by cysteine 271, cysteine 274, cysteine 306, and glutamate 313.

The protein belongs to the IspG family. [4Fe-4S] cluster serves as cofactor.

The enzyme catalyses (2E)-4-hydroxy-3-methylbut-2-enyl diphosphate + oxidized [flavodoxin] + H2O + 2 H(+) = 2-C-methyl-D-erythritol 2,4-cyclic diphosphate + reduced [flavodoxin]. It functions in the pathway isoprenoid biosynthesis; isopentenyl diphosphate biosynthesis via DXP pathway; isopentenyl diphosphate from 1-deoxy-D-xylulose 5-phosphate: step 5/6. Functionally, converts 2C-methyl-D-erythritol 2,4-cyclodiphosphate (ME-2,4cPP) into 1-hydroxy-2-methyl-2-(E)-butenyl 4-diphosphate. The polypeptide is 4-hydroxy-3-methylbut-2-en-1-yl diphosphate synthase (flavodoxin) (Actinobacillus succinogenes (strain ATCC 55618 / DSM 22257 / CCUG 43843 / 130Z)).